The primary structure comprises 351 residues: Fe-S cluster assembly protein DRE2 (351 aa).

The interval 1-151 is N-terminal SAM-like domain; it reads MATTGRVLLL…KPDIGAQQAI (151 aa). Residues 93–118 form a disordered region; that stretch reads RNRENKPWGLSDGNGNNANSSRRYND. The span at 105 to 114 shows a compositional bias: polar residues; it reads GNGNNANSSR. A linker region spans residues 152–243; it reads PLKLGRRRKE…EDELLDEDDM (92 aa). Cysteine 253, cysteine 264, cysteine 267, and cysteine 269 together coordinate [2Fe-2S] cluster. A fe-S binding site A region spans residues 253–269; the sequence is CRPKPGKRRRACKDCSC. [4Fe-4S] cluster-binding residues include cysteine 314, cysteine 317, cysteine 325, and cysteine 328. 2 short sequence motifs (cx2C motif) span residues 314–317 and 325–328; these read CGNC and CDGC. The interval 314–328 is fe-S binding site B; sequence CGNCSLGDAFRCDGC.

Belongs to the anamorsin family. In terms of assembly, monomer. Interacts with TAH18. Interacts with MIA40. It depends on [2Fe-2S] cluster as a cofactor. [4Fe-4S] cluster serves as cofactor.

It localises to the cytoplasm. The protein resides in the mitochondrion intermembrane space. Its function is as follows. Component of the cytosolic iron-sulfur (Fe-S) protein assembly (CIA) machinery required for the maturation of extramitochondrial Fe-S proteins. Part of an electron transfer chain functioning in an early step of cytosolic Fe-S biogenesis, facilitating the de novo assembly of a [4Fe-4S] cluster on the scaffold complex CFD1-NBP35. Electrons are transferred to DRE2 from NADPH via the FAD- and FMN-containing protein TAH18. TAH18-DRE2 are also required for the assembly of the diferric tyrosyl radical cofactor of ribonucleotide reductase (RNR), probably by providing electrons for reduction during radical cofactor maturation in the catalytic small subunit RNR2. This is Fe-S cluster assembly protein DRE2 from Ajellomyces capsulatus (strain H143) (Darling's disease fungus).